We begin with the raw amino-acid sequence, 447 residues long: MKAHEVNFDGLVGLTHHYAGLSFGNEASIQHRFQVSNPRLAAKQGLLKMKALADAGFPQAVIPPHERPFIPVLRQLGFSGQDEQVLEKVARQAPHWLSSVSSASPMWVANAATVCPSADALDGKVHLTVANLNNKFHRALEAPTTASLLRAIFRDAQFFAVHDALPQVALLGDEGAANHNRLGGDYGAPGIQLFVYGREEGVDTRPVRYPARQTREASEAVARLNQVNPHQVIFARQNPDVIDLGVFHNDVIAVSNRQVLFCHEQAFAKQGELMRQLRSRVAGFMPLEVPAREVSVQDAVATYLFNSQLLSRDDGSMVLVLPQECREHAGVWRYLNALLAADNPISDLRVFDLRESMANGGGPACLRLRVVLTEDELRAVNPAVMMNDTLFSTLNDWVDRYYRDRLTAADLADPQLLREGREALDTLTQLLNLGSVYPFQQEGAGNG.

Substrate is bound by residues 19 to 28 (AGLSFGNEAS), asparagine 110, and 137 to 138 (HR). Glutamate 174 is a catalytic residue. Arginine 212 is a substrate binding site. Residue histidine 248 is part of the active site. Substrate contacts are provided by aspartate 250 and asparagine 359. Cysteine 365 serves as the catalytic Nucleophile.

It belongs to the succinylarginine dihydrolase family. Homodimer.

It catalyses the reaction N(2)-succinyl-L-arginine + 2 H2O + 2 H(+) = N(2)-succinyl-L-ornithine + 2 NH4(+) + CO2. The protein operates within amino-acid degradation; L-arginine degradation via AST pathway; L-glutamate and succinate from L-arginine: step 2/5. Functionally, catalyzes the hydrolysis of N(2)-succinylarginine into N(2)-succinylornithine, ammonia and CO(2). This is N-succinylarginine dihydrolase from Citrobacter koseri (strain ATCC BAA-895 / CDC 4225-83 / SGSC4696).